The following is a 116-amino-acid chain: Large ribosomal subunit protein eL31 (116 aa).

This sequence belongs to the eukaryotic ribosomal protein eL31 family.

The chain is Large ribosomal subunit protein eL31 (RPL31) from Chlamydomonas reinhardtii (Chlamydomonas smithii).